We begin with the raw amino-acid sequence, 463 residues long: Altered inheritance of mitochondria protein 23, mitochondrial (463 aa).

The N-terminal 69 residues, 1-69, are a transit peptide targeting the mitochondrion; that stretch reads MKLHTRTLLA…TRFGNNNERY (69 aa). Disordered stretches follow at residues 25–124, 208–229, and 391–449; these read LNRP…NQKL, IHSS…GAST, and KKPT…KKLT. The span at 48–79 shows a compositional bias: polar residues; the sequence is QPRTGSNLSPRQTRFGNNNERYGSASGKQLGQ. Residues 94-114 show a composition bias toward low complexity; that stretch reads NHNNNSNNNNNGGYPSSNVNS. Positions 213-224 are enriched in basic and acidic residues; sequence RKADSKTEDGAD. Residues 391–405 are compositionally biased toward polar residues; the sequence is KKPTTGGTNSTSTIK. 2 stretches are compositionally biased toward basic and acidic residues: residues 406–423 and 440–449; these read QTDK…KEKL and PPAKEKKKLT.

Belongs to the AIM23 family.

The protein resides in the mitochondrion. The chain is Altered inheritance of mitochondria protein 23, mitochondrial (AIM23) from Lodderomyces elongisporus (strain ATCC 11503 / CBS 2605 / JCM 1781 / NBRC 1676 / NRRL YB-4239) (Yeast).